Here is a 362-residue protein sequence, read N- to C-terminus: Heme A synthase (362 aa).

A run of 5 helical transmembrane segments spans residues 12–32 (AVRIWLAIIAGLIAVMVLVGG), 102–122 (VIGAAFLLPFLWFLWRGDLGG), 128–148 (LWIIFGLGALQGAVGWWMVAS), 159–179 (VRLATHLVLALLIFAGIVWTL), and 198–218 (AAVLLGLTFVQLYLGALVAGL). A heme-binding site is contributed by histidine 262. Helical transmembrane passes span 264-281 (MLAYALWALAVLHAIDAW), 289-309 (GALALAVAITLQAALGIVTLL), and 312-332 (VPIGLGLAHQAMAILVLTLAV). Histidine 320 provides a ligand contact to heme.

Belongs to the COX15/CtaA family. Type 2 subfamily. In terms of assembly, interacts with CtaB. It depends on heme b as a cofactor.

It localises to the cell membrane. The catalysed reaction is Fe(II)-heme o + 2 A + H2O = Fe(II)-heme a + 2 AH2. Its pathway is porphyrin-containing compound metabolism; heme A biosynthesis; heme A from heme O: step 1/1. Its function is as follows. Catalyzes the conversion of heme O to heme A by two successive hydroxylations of the methyl group at C8. The first hydroxylation forms heme I, the second hydroxylation results in an unstable dihydroxymethyl group, which spontaneously dehydrates, resulting in the formyl group of heme A. This is Heme A synthase from Rhodopseudomonas palustris (strain BisB18).